The following is a 333-amino-acid chain: Glycerol-3-phosphate dehydrogenase [NAD(P)+] (333 aa).

Positions 13, 33, and 108 each coordinate NADPH. Lysine 108 and glycine 138 together coordinate sn-glycerol 3-phosphate. Serine 142 provides a ligand contact to NADPH. Lysine 193, aspartate 246, serine 256, arginine 257, and asparagine 258 together coordinate sn-glycerol 3-phosphate. The active-site Proton acceptor is the lysine 193. Arginine 257 lines the NADPH pocket. NADPH-binding residues include valine 281 and glutamate 283.

It belongs to the NAD-dependent glycerol-3-phosphate dehydrogenase family.

The protein localises to the cytoplasm. It catalyses the reaction sn-glycerol 3-phosphate + NAD(+) = dihydroxyacetone phosphate + NADH + H(+). The enzyme catalyses sn-glycerol 3-phosphate + NADP(+) = dihydroxyacetone phosphate + NADPH + H(+). The protein operates within membrane lipid metabolism; glycerophospholipid metabolism. In terms of biological role, catalyzes the reduction of the glycolytic intermediate dihydroxyacetone phosphate (DHAP) to sn-glycerol 3-phosphate (G3P), the key precursor for phospholipid synthesis. This is Glycerol-3-phosphate dehydrogenase [NAD(P)+] from Bifidobacterium longum subsp. infantis (strain ATCC 15697 / DSM 20088 / JCM 1222 / NCTC 11817 / S12).